The sequence spans 111 residues: C-type lectin lectoxin-Enh2 (111 aa).

Residues 1 to 23 (MGQFTVVSLGLLAMFLSLSGAKG) form the signal peptide. Residues cysteine 26 and cysteine 37 are joined by a disulfide bond. The 76-residue stretch at 33–108 (RNGVCNKLFP…CASLHPFICQ (76 aa)) folds into the C-type lectin domain. The Mannose-binding motif lies at 72 to 74 (EPN). The Ca(2+) site is built by glutamate 80, asparagine 95, and aspartate 96. The cysteines at positions 82 and 99 are disulfide-linked.

It belongs to the true venom lectin family. As to expression, expressed by the venom gland.

It localises to the secreted. Mannose-binding lectin which recognizes specific carbohydrate structures and agglutinates a variety of animal cells by binding to cell-surface glycoproteins and glycolipids. May be a calcium-dependent lectin. This is C-type lectin lectoxin-Enh2 from Pseudoferania polylepis (Macleay's water snake).